A 197-amino-acid chain; its full sequence is Xanthine phosphoribosyltransferase (197 aa).

Leucine 20 and asparagine 27 together coordinate xanthine. 128 to 132 (ANGQA) provides a ligand contact to 5-phospho-alpha-D-ribose 1-diphosphate. Lysine 156 lines the xanthine pocket.

It belongs to the purine/pyrimidine phosphoribosyltransferase family. Xpt subfamily. Homodimer.

Its subcellular location is the cytoplasm. The catalysed reaction is XMP + diphosphate = xanthine + 5-phospho-alpha-D-ribose 1-diphosphate. The protein operates within purine metabolism; XMP biosynthesis via salvage pathway; XMP from xanthine: step 1/1. Functionally, converts the preformed base xanthine, a product of nucleic acid breakdown, to xanthosine 5'-monophosphate (XMP), so it can be reused for RNA or DNA synthesis. In Bacillus mycoides (strain KBAB4) (Bacillus weihenstephanensis), this protein is Xanthine phosphoribosyltransferase.